The sequence spans 101 residues: Protein S100-A4 (101 aa).

Position 7 is an N6-acetyllysine (Lys-7). EF-hand domains are found at residues 12–47 and 50–85; these read MVST…SFLG and TDEA…VAMM. Ca(2+)-binding residues include Lys-28 and Glu-33. The residue at position 35 (Lys-35) is an N6-acetyllysine. Ca(2+) is bound by residues Asp-63, Asn-65, Asp-67, Glu-69, and Glu-74.

It belongs to the S-100 family. Homodimer. Interacts with PPFIBP1 in a calcium-dependent mode. Interacts with PGLYRP1; this complex acts as a chemoattractant that promotes lymphocyte movement. Interacts with MYH9; this interaction increases cell motility. Interacts with Annexin 2/ANXA2. Interacts with TP53; this interaction promotes TP53 degradation. Interacts with CCR5 and CXCR3. Interacts with FCGR3A; this interaction inhibits PKC-dependent phosphorylation of FCGR3A.

The protein resides in the secreted. It localises to the nucleus. The protein localises to the cytoplasm. In terms of biological role, calcium-binding protein that plays a role in various cellular processes including motility, angiogenesis, cell differentiation, apoptosis, and autophagy. Increases cell motility and invasiveness by interacting with non-muscle myosin heavy chain (NMMHC) IIA/MYH9. Mechanistically, promotes filament depolymerization and increases the amount of soluble myosin-IIA, resulting in the formation of stable protrusions facilitating chemotaxis. Also modulates the pro-apoptotic function of TP53 by binding to its C-terminal transactivation domain within the nucleus and reducing its protein levels. Within the extracellular space, stimulates cytokine production including granulocyte colony-stimulating factor and CCL24 from T-lymphocytes. In addition, stimulates T-lymphocyte chemotaxis by acting as a chemoattractant complex with PGLYRP1 that promotes lymphocyte migration via CCR5 and CXCR3 receptors. The chain is Protein S100-A4 (S100A4) from Canis lupus familiaris (Dog).